We begin with the raw amino-acid sequence, 322 residues long: Aspartate carbamoyltransferase catalytic subunit (322 aa).

Residues Arg-70 and Thr-71 each contribute to the carbamoyl phosphate site. Lys-98 is a binding site for L-aspartate. Carbamoyl phosphate contacts are provided by Arg-120, His-150, and Gln-153. Arg-184 and Arg-239 together coordinate L-aspartate. Carbamoyl phosphate is bound by residues Gly-280 and Pro-281.

Belongs to the aspartate/ornithine carbamoyltransferase superfamily. ATCase family. Heterododecamer (2C3:3R2) of six catalytic PyrB chains organized as two trimers (C3), and six regulatory PyrI chains organized as three dimers (R2).

It carries out the reaction carbamoyl phosphate + L-aspartate = N-carbamoyl-L-aspartate + phosphate + H(+). The protein operates within pyrimidine metabolism; UMP biosynthesis via de novo pathway; (S)-dihydroorotate from bicarbonate: step 2/3. In terms of biological role, catalyzes the condensation of carbamoyl phosphate and aspartate to form carbamoyl aspartate and inorganic phosphate, the committed step in the de novo pyrimidine nucleotide biosynthesis pathway. This chain is Aspartate carbamoyltransferase catalytic subunit, found in Xylella fastidiosa (strain 9a5c).